A 260-amino-acid chain; its full sequence is Cell division protein DivIB (260 aa).

The Cytoplasmic segment spans residues 1–25 (MGAQDQNGKNHGGLFRDFQNRNVKK). The helical transmembrane segment at 26-46 (MWPLVMPITIILLVMIFMISS) threads the bilayer. At 47–260 (YSRVKKVTVS…STKTTSVQGY (214 aa)) the chain is on the extracellular side. In terms of domain architecture, POTRA spans 48–119 (SRVKKVTVSG…NQVKIKVEEY (72 aa)).

The protein belongs to the FtsQ/DivIB family. DivIB subfamily.

It localises to the cell membrane. Its function is as follows. Cell division protein that may be involved in stabilizing or promoting the assembly of the division complex. The polypeptide is Cell division protein DivIB (Lentilactobacillus buchneri (strain NRRL B-30929) (Lactobacillus buchneri)).